Reading from the N-terminus, the 293-residue chain is 4-hydroxy-tetrahydrodipicolinate synthase (293 aa).

Residue Thr-44 participates in pyruvate binding. Tyr-132 acts as the Proton donor/acceptor in catalysis. The Schiff-base intermediate with substrate role is filled by Lys-161. A pyruvate-binding site is contributed by Ile-203.

Belongs to the DapA family. As to quaternary structure, homotetramer; dimer of dimers.

It localises to the cytoplasm. It catalyses the reaction L-aspartate 4-semialdehyde + pyruvate = (2S,4S)-4-hydroxy-2,3,4,5-tetrahydrodipicolinate + H2O + H(+). It participates in amino-acid biosynthesis; L-lysine biosynthesis via DAP pathway; (S)-tetrahydrodipicolinate from L-aspartate: step 3/4. Catalyzes the condensation of (S)-aspartate-beta-semialdehyde [(S)-ASA] and pyruvate to 4-hydroxy-tetrahydrodipicolinate (HTPA). This chain is 4-hydroxy-tetrahydrodipicolinate synthase, found in Persephonella marina (strain DSM 14350 / EX-H1).